A 490-amino-acid chain; its full sequence is Secretory immunoglobulin A-binding protein EsiB (490 aa).

A signal peptide spans methionine 1–glycine 23. Sel1-like repeat units lie at residues alanine 39–tyrosine 74, alanine 77–glycine 109, proline 111–glycine 145, methionine 153–asparagine 182, serine 185–aspartate 218, glutamine 222–asparagine 254, isoleucine 256–asparagine 290, serine 291–aspartate 327, alanine 328–glycine 361, alanine 364–glycine 397, and serine 399–serine 430. The Mg(2+) site is built by histidine 122, glutamate 159, and aspartate 161.

As to quaternary structure, interacts with human secreted IgA (SIgA) at least via resides 244-260. The cofactor is Mg(2+).

The protein localises to the cell surface. Upon host (human neutrophil) infection interferes with productive FCAR signaling, inhibiting secreted IgA (SIgA) effector functions and probably avoiding neutrophil activation. Inhibits the SIgA-mediated oxidative burst by neutrophils, decreases generation of ROS (reactive oxygen species) by neutrophils and reduces chemotaxis by neutrophils, all of which are SIgA effector functions used to stimulate the immune response. Does not block SIgA-binding to its receptor (FCAR) on neutrophils, but it decreases SIgA-stimulated phosphorylation of cytoplasmic proteins, including phospholipase C-gamma and MAP kinases, all actions that may be advantageous to the pathogen. In Escherichia coli O6:H1 (strain CFT073 / ATCC 700928 / UPEC), this protein is Secretory immunoglobulin A-binding protein EsiB.